The chain runs to 318 residues: Ribose-phosphate pyrophosphokinase 1 (318 aa).

ATP is bound by residues 43–45 (DGE) and 102–103 (RQ). Mg(2+)-binding residues include histidine 136 and aspartate 176. Lysine 199 is a catalytic residue. D-ribose 5-phosphate contacts are provided by residues arginine 201, aspartate 225, and 229–233 (DTAGT).

It belongs to the ribose-phosphate pyrophosphokinase family. Class I subfamily. Homohexamer. It depends on Mg(2+) as a cofactor.

It is found in the cytoplasm. The catalysed reaction is D-ribose 5-phosphate + ATP = 5-phospho-alpha-D-ribose 1-diphosphate + AMP + H(+). It functions in the pathway metabolic intermediate biosynthesis; 5-phospho-alpha-D-ribose 1-diphosphate biosynthesis; 5-phospho-alpha-D-ribose 1-diphosphate from D-ribose 5-phosphate (route I): step 1/1. In terms of biological role, involved in the biosynthesis of the central metabolite phospho-alpha-D-ribosyl-1-pyrophosphate (PRPP) via the transfer of pyrophosphoryl group from ATP to 1-hydroxyl of ribose-5-phosphate (Rib-5-P). The chain is Ribose-phosphate pyrophosphokinase 1 from Listeria innocua serovar 6a (strain ATCC BAA-680 / CLIP 11262).